We begin with the raw amino-acid sequence, 711 residues long: Polyribonucleotide nucleotidyltransferase (711 aa).

Mg(2+) is bound by residues Asp-486 and Asp-492. Residues 553–612 enclose the KH domain; it reads PRIHTIKINPDKIKDVIGKGGSVIRALTEETGTTIEIEDDGTVKIAATDGEKAKHAIRRI. The region spanning 622–690 is the S1 motif domain; that stretch reads GRIYNGKVTR…RQGRVRLSIK (69 aa). Residues 690 to 711 are disordered; it reads KEATEQSQPAAAPEAPAAEQGE. The segment covering 694-711 has biased composition (low complexity); the sequence is EQSQPAAAPEAPAAEQGE.

The protein belongs to the polyribonucleotide nucleotidyltransferase family. In terms of assembly, component of the RNA degradosome, which is a multiprotein complex involved in RNA processing and mRNA degradation. Requires Mg(2+) as cofactor.

It is found in the cytoplasm. It catalyses the reaction RNA(n+1) + phosphate = RNA(n) + a ribonucleoside 5'-diphosphate. Involved in mRNA degradation. Catalyzes the phosphorolysis of single-stranded polyribonucleotides processively in the 3'- to 5'-direction. The protein is Polyribonucleotide nucleotidyltransferase of Citrobacter koseri (strain ATCC BAA-895 / CDC 4225-83 / SGSC4696).